The chain runs to 271 residues: Aliphatic sulfonates import ATP-binding protein SsuB (271 aa).

One can recognise an ABC transporter domain in the interval 13–234 (ITLESIGKRY…RKGSAKLAAL (222 aa)). Residue 45-52 (GRSGCGKS) coordinates ATP. The tract at residues 250–271 (EASRQGIKASRQGTATSRRVAN) is disordered. The segment covering 260 to 271 (RQGTATSRRVAN) has biased composition (polar residues).

The protein belongs to the ABC transporter superfamily. Aliphatic sulfonates importer (TC 3.A.1.17.2) family. As to quaternary structure, the complex is composed of two ATP-binding proteins (SsuB), two transmembrane proteins (SsuC) and a solute-binding protein (SsuA).

The protein resides in the cell inner membrane. It catalyses the reaction ATP + H2O + aliphatic sulfonate-[sulfonate-binding protein]Side 1 = ADP + phosphate + aliphatic sulfonateSide 2 + [sulfonate-binding protein]Side 1.. Its function is as follows. Part of the ABC transporter complex SsuABC involved in aliphatic sulfonates import. Responsible for energy coupling to the transport system. In Yersinia pestis bv. Antiqua (strain Antiqua), this protein is Aliphatic sulfonates import ATP-binding protein SsuB.